We begin with the raw amino-acid sequence, 127 residues long: MVNIDLKDAGGLPLAYLGDAVWELTVREYFVEKGYKINTMNKKVKKLVNAKAQSVIFKSILEDLDEDYKAVARRAKNSNIKSFPRSCSIMEYREATAFEALIAAFYINGETCRIKKILENHISEGEK.

The active site involves D19.

It belongs to the MrnC RNase family.

In terms of biological role, might be a ribonuclease involved in RNA processing. The polypeptide is Mini-ribonuclease 3-like protein (mrnCL) (Ilyobacter polytropus (strain ATCC 51220 / DSM 2926 / LMG 16218 / CuHBu1)).